We begin with the raw amino-acid sequence, 103 residues long: MSDSPVDLKPKPKVKPKLERPKLYKVMLLNDDYTPREFVTVVLKAVFRMSEDTGRRVMMTAHRFGSAVVVVCERDIAETKAKEATDLGKEAGFPLMFTTEPEE.

This sequence belongs to the ClpS family. As to quaternary structure, binds to the N-terminal domain of the chaperone ClpA.

Functionally, involved in the modulation of the specificity of the ClpAP-mediated ATP-dependent protein degradation. In Agrobacterium fabrum (strain C58 / ATCC 33970) (Agrobacterium tumefaciens (strain C58)), this protein is ATP-dependent Clp protease adapter protein ClpS 2.